A 324-amino-acid polypeptide reads, in one-letter code: Methenyltetrahydromethanopterin cyclohydrolase (324 aa).

Belongs to the MCH family.

The protein resides in the cytoplasm. The enzyme catalyses 5,10-methenyl-5,6,7,8-tetrahydromethanopterin + H2O = N(5)-formyl-5,6,7,8-tetrahydromethanopterin + H(+). Its pathway is one-carbon metabolism; methanogenesis from CO(2); 5,10-methenyl-5,6,7,8-tetrahydromethanopterin from CO(2): step 3/3. Its function is as follows. Catalyzes the reversible interconversion of 5-formyl-H(4)MPT to methenyl-H(4)MPT(+). In Methanococcus aeolicus (strain ATCC BAA-1280 / DSM 17508 / OCM 812 / Nankai-3), this protein is Methenyltetrahydromethanopterin cyclohydrolase.